A 244-amino-acid polypeptide reads, in one-letter code: Small ribosomal subunit protein eS4 (244 aa).

Positions valine 37–asparagine 123 constitute an S4 RNA-binding domain.

This sequence belongs to the eukaryotic ribosomal protein eS4 family.

The polypeptide is Small ribosomal subunit protein eS4 (rps4e) (Sulfolobus acidocaldarius (strain ATCC 33909 / DSM 639 / JCM 8929 / NBRC 15157 / NCIMB 11770)).